Reading from the N-terminus, the 101-residue chain is Small ribosomal subunit protein uS14 (101 aa).

Belongs to the universal ribosomal protein uS14 family. As to quaternary structure, part of the 30S ribosomal subunit. Contacts proteins S3 and S10.

In terms of biological role, binds 16S rRNA, required for the assembly of 30S particles and may also be responsible for determining the conformation of the 16S rRNA at the A site. This chain is Small ribosomal subunit protein uS14, found in Shewanella halifaxensis (strain HAW-EB4).